The primary structure comprises 271 residues: Formamidopyrimidine-DNA glycosylase (271 aa).

Residue Pro2 is the Schiff-base intermediate with DNA of the active site. Glu3 (proton donor) is an active-site residue. The Proton donor; for beta-elimination activity role is filled by Lys58. The DNA site is built by His91, Arg110, and Arg152. Residues 237–271 (LVYGREGQPCVHCGRPIRCETIGQRSSYFCTRCQR) form an FPG-type zinc finger. Arg261 acts as the Proton donor; for delta-elimination activity in catalysis.

This sequence belongs to the FPG family. Monomer. It depends on Zn(2+) as a cofactor.

It catalyses the reaction Hydrolysis of DNA containing ring-opened 7-methylguanine residues, releasing 2,6-diamino-4-hydroxy-5-(N-methyl)formamidopyrimidine.. The enzyme catalyses 2'-deoxyribonucleotide-(2'-deoxyribose 5'-phosphate)-2'-deoxyribonucleotide-DNA = a 3'-end 2'-deoxyribonucleotide-(2,3-dehydro-2,3-deoxyribose 5'-phosphate)-DNA + a 5'-end 5'-phospho-2'-deoxyribonucleoside-DNA + H(+). Functionally, involved in base excision repair of DNA damaged by oxidation or by mutagenic agents. Acts as a DNA glycosylase that recognizes and removes damaged bases. Has a preference for oxidized purines, such as 7,8-dihydro-8-oxoguanine (8-oxoG). Has AP (apurinic/apyrimidinic) lyase activity and introduces nicks in the DNA strand. Cleaves the DNA backbone by beta-delta elimination to generate a single-strand break at the site of the removed base with both 3'- and 5'-phosphates. This Syntrophotalea carbinolica (strain DSM 2380 / NBRC 103641 / GraBd1) (Pelobacter carbinolicus) protein is Formamidopyrimidine-DNA glycosylase.